Reading from the N-terminus, the 475-residue chain is Putative aldehyde dehydrogenase SSP0762 (475 aa).

Residue 201–207 (GDGQGVG) coordinates NAD(+). Catalysis depends on residues E245 and C279.

The protein belongs to the aldehyde dehydrogenase family.

The catalysed reaction is an aldehyde + NAD(+) + H2O = a carboxylate + NADH + 2 H(+). In Staphylococcus saprophyticus subsp. saprophyticus (strain ATCC 15305 / DSM 20229 / NCIMB 8711 / NCTC 7292 / S-41), this protein is Putative aldehyde dehydrogenase SSP0762.